Consider the following 491-residue polypeptide: Glutamyl-tRNA(Gln) amidotransferase subunit A (491 aa).

Residues Lys-79 and Ser-158 each act as charge relay system in the active site. The active-site Acyl-ester intermediate is Ser-182.

It belongs to the amidase family. GatA subfamily. Heterotrimer of A, B and C subunits.

The catalysed reaction is L-glutamyl-tRNA(Gln) + L-glutamine + ATP + H2O = L-glutaminyl-tRNA(Gln) + L-glutamate + ADP + phosphate + H(+). Allows the formation of correctly charged Gln-tRNA(Gln) through the transamidation of misacylated Glu-tRNA(Gln) in organisms which lack glutaminyl-tRNA synthetase. The reaction takes place in the presence of glutamine and ATP through an activated gamma-phospho-Glu-tRNA(Gln). The sequence is that of Glutamyl-tRNA(Gln) amidotransferase subunit A from Anaplasma phagocytophilum (strain HZ).